Consider the following 176-residue polypeptide: Large ribosomal subunit protein uL10 (176 aa).

The protein belongs to the universal ribosomal protein uL10 family. As to quaternary structure, part of the ribosomal stalk of the 50S ribosomal subunit. The N-terminus interacts with L11 and the large rRNA to form the base of the stalk. The C-terminus forms an elongated spine to which L12 dimers bind in a sequential fashion forming a multimeric L10(L12)X complex.

Its function is as follows. Forms part of the ribosomal stalk, playing a central role in the interaction of the ribosome with GTP-bound translation factors. The sequence is that of Large ribosomal subunit protein uL10 from Marinobacter nauticus (strain ATCC 700491 / DSM 11845 / VT8) (Marinobacter aquaeolei).